We begin with the raw amino-acid sequence, 742 residues long: Ion-translocating oxidoreductase complex subunit C (742 aa).

4Fe-4S ferredoxin-type domains follow at residues 369 to 397 and 407 to 436; these read GEPQ…QQLY and KATT…VQYF. Positions 377, 380, 383, 387, 416, 419, 422, and 426 each coordinate [4Fe-4S] cluster. The segment at 602–719 is disordered; it reads KLEQQQANAE…PEEQVDPRKA (118 aa).

This sequence belongs to the 4Fe4S bacterial-type ferredoxin family. RnfC subfamily. As to quaternary structure, the complex is composed of six subunits: RsxA, RsxB, RsxC, RsxD, RsxE and RsxG. Requires [4Fe-4S] cluster as cofactor.

The protein resides in the cell inner membrane. Functionally, part of a membrane-bound complex that couples electron transfer with translocation of ions across the membrane. Required to maintain the reduced state of SoxR. This Escherichia coli O6:H1 (strain CFT073 / ATCC 700928 / UPEC) protein is Ion-translocating oxidoreductase complex subunit C.